The primary structure comprises 216 residues: Homeobox-leucine zipper protein ATHB-40 (216 aa).

The interval 28 to 52 is disordered; the sequence is GEVKQPKRRRKKTKGSVASADGGNG. Residues 52 to 111 constitute a DNA-binding region (homeobox); sequence GLFRKRKLTDEQVNMLEMSFGDEHKLESERKDRLAAELGLDPRQVAVWFQNRRARWKNKR. The segment at 112–140 is leucine-zipper; it reads LEEEYNKLKNSHDNVVVDKCRLESEVIQL.

It belongs to the HD-ZIP homeobox family. Class I subfamily. As to expression, expressed in roots, flowers and siliques.

It is found in the nucleus. In terms of biological role, probable transcription factor. The sequence is that of Homeobox-leucine zipper protein ATHB-40 (ATHB-40) from Arabidopsis thaliana (Mouse-ear cress).